The chain runs to 192 residues: MKNKVVVVTGVPGVGGTTVTQKAMDILSEEGLNYKMVNFGSAMFEVANEEGLASDRDQMRKLDPETQKRIQKMAGRKIAEMAKEYPVAVDTHSTVKTPKGYLPGLPAWVLTELNPDMVIVVETDGDEILMRRLSDESRKRDLETTASIEEHQFMNRAAAMSYGVLTGATVKIVKNKNGLVDNAVEELISVLR.

10 to 18 provides a ligand contact to ATP; the sequence is GVPGVGGTT.

The protein belongs to the archaeal adenylate kinase family. Monomer.

It is found in the cytoplasm. It carries out the reaction AMP + ATP = 2 ADP. The polypeptide is Adenylate kinase (Methanococcus maripaludis (strain C7 / ATCC BAA-1331)).